Consider the following 1427-residue polypeptide: Tonsoku-like protein (1427 aa).

Residues 1–21 are disordered; sequence MTSTKEIKQLQKAKSKAQSSN. Over residues 10–21 the composition is skewed to low complexity; the sequence is LQKAKSKAQSSN. TPR repeat units follow at residues 27–60, 67–100, 107–147, 162–195, 202–235, 242–275, 311–344, and 352–385; these read ASLCNQLGEVYAKTGDYQAAIEEHRQELALSEIL, AVANRKIGECYAELGNIEAALKHQRLHLNLARSV, QRAL…VDER, ARLLLNLGCVYDGMKEPQRCSDLIRQSIYIAEKN, YRANFNLGSIHFRNGQHSRAMRCFEQSKECARKM, SECFHSIGKILLHLGDFSAARRSLKKAFCLGSQQ, LDLSEQLGDLYCKVGCYSKALEAYQTQLACAEAL, and AVIHVSLAATYTDLRQHHRAVEHYRQELQLRKGN. Residues 465–502 form a disordered region; the sequence is LSLDQSEDEDEEDEVDNSEPLEDSDIQYSESDDEDLEG. Positions 469–501 are enriched in acidic residues; the sequence is QSEDEDEEDEVDNSEPLEDSDIQYSESDDEDLE. 3 ANK repeats span residues 522–551, 555–584, and 591–620; these read KGETVLHRACIEGNLKQVQYLIEQGHPVNV, CGWTPLHESCNYGHQEIVAFLLDRGANVND, and GGITPLHDTLSCGHFSVARLLVLRGASVTV. 3 disordered regions span residues 692 to 801, 865 to 922, and 941 to 961; these read PLLR…SESG, KKKR…KMNQ, and IMTQESDHIQEPAPPSHQAMP. Positions 742–761 are enriched in low complexity; that stretch reads DDSSSSDNPDSDCSLSPLRP. Positions 773 to 783 are enriched in polar residues; it reads SPQEVPSSQEL. Over residues 871 to 880 the composition is skewed to basic and acidic residues; sequence SEHNATRETT. The span at 881–890 shows a compositional bias: polar residues; that stretch reads SRSQNNSSTI. Positions 899-910 are enriched in low complexity; sequence SCSSRGSLSLKK. LRR repeat units follow at residues 1113–1137, 1141–1168, 1174–1197, 1234–1258, 1293–1316, 1321–1346, and 1377–1400; these read QASLTELRISANRLNDELLPEMMAA, MPRLRVLDISANQITGEGLRKASDAFET, FPCLEELNLSMNPLGDGWTQALAS, TGNMRSVCLSHNALGSTGFELVLKT, DCPLTHLNLSGNGLTDHSVLLLAR, CPSLVSLDLSANPLVTSTGLHSLLNG, and SDHIRDLRLCSQSLNKLDQDALQQ.

This sequence belongs to the Tonsoku family. Component of the MMS22L-TONSL complex. Binds histones, with a strong preference for histone H3.1 (histones H3.1 and H3-4/H3.1t).

The protein resides in the nucleus. The protein localises to the chromosome. It is found in the cytoplasm. Component of the MMS22L-TONSL complex, a complex that promotes homologous recombination-mediated repair of double-strand breaks (DSBs) at stalled or collapsed replication forks. The MMS22L-TONSL complex is required to maintain genome integrity during DNA replication. It mediates the assembly of RAD51 filaments on single-stranded DNA (ssDNA): the MMS22L-TONSL complex is recruited to DSBs following histone replacement by histone chaperones and eviction of the replication protein A complex (RPA/RP-A) from DSBs. Following recruitment to DSBs, the TONSL-MMS22L complex promotes recruitment of RAD51 filaments and subsequent homologous recombination. Within the complex, TONSL acts as a histone reader, which recognizes and binds newly synthesized histones following their replacement by histone chaperones. The polypeptide is Tonsoku-like protein (tonsl) (Danio rerio (Zebrafish)).